Reading from the N-terminus, the 68-residue chain is DNA-directed RNA polymerase subunit omega (68 aa).

Belongs to the RNA polymerase subunit omega family. In terms of assembly, the RNAP catalytic core consists of 2 alpha, 1 beta, 1 beta' and 1 omega subunit. When a sigma factor is associated with the core the holoenzyme is formed, which can initiate transcription.

It catalyses the reaction RNA(n) + a ribonucleoside 5'-triphosphate = RNA(n+1) + diphosphate. In terms of biological role, promotes RNA polymerase assembly. Latches the N- and C-terminal regions of the beta' subunit thereby facilitating its interaction with the beta and alpha subunits. This chain is DNA-directed RNA polymerase subunit omega, found in Brevibacillus brevis (strain 47 / JCM 6285 / NBRC 100599).